The chain runs to 138 residues: Large ribosomal subunit protein bL17 (138 aa).

Belongs to the bacterial ribosomal protein bL17 family. As to quaternary structure, part of the 50S ribosomal subunit. Contacts protein L32.

This chain is Large ribosomal subunit protein bL17, found in Methylorubrum populi (strain ATCC BAA-705 / NCIMB 13946 / BJ001) (Methylobacterium populi).